The sequence spans 130 residues: Protein LLP homolog (130 aa).

Basic residues predominate over residues methionine 1–asparagine 21. Disordered regions lie at residues methionine 1–proline 23 and glutamine 57–aspartate 76. Residues lysine 10 to lysine 78 are a coiled coil. Residue lysine 78 forms a Glycyl lysine isopeptide (Lys-Gly) (interchain with G-Cter in SUMO2) linkage. Positions arginine 104 to alanine 124 are enriched in basic residues. The disordered stretch occupies residues arginine 104–tryptophan 130.

This sequence belongs to the learning-associated protein family. Interacts with CTCF, MYO1C and with the transcriptional machinery, including RNA polymerase II and TBP. In terms of tissue distribution, widely expressed, with high levels in testis and spleen and low levels in heart. In the brain, expressed in the cortex and hippocampus, and at very low levels in the cerebellum.

It is found in the nucleus. It localises to the nucleolus. The protein resides in the chromosome. Its function is as follows. In hippocampal neurons, regulates dendritic and spine growth and synaptic transmission. The chain is Protein LLP homolog (Llph) from Mus musculus (Mouse).